The primary structure comprises 188 residues: Peptide deformylase (188 aa).

Residues Cys94 and His136 each coordinate Fe cation. Residue Glu137 is part of the active site. His140 contributes to the Fe cation binding site.

The protein belongs to the polypeptide deformylase family. It depends on Fe(2+) as a cofactor.

The catalysed reaction is N-terminal N-formyl-L-methionyl-[peptide] + H2O = N-terminal L-methionyl-[peptide] + formate. In terms of biological role, removes the formyl group from the N-terminal Met of newly synthesized proteins. Requires at least a dipeptide for an efficient rate of reaction. N-terminal L-methionine is a prerequisite for activity but the enzyme has broad specificity at other positions. The polypeptide is Peptide deformylase (Pelodictyon phaeoclathratiforme (strain DSM 5477 / BU-1)).